The chain runs to 1024 residues: Error-prone DNA polymerase (1024 aa).

The protein belongs to the DNA polymerase type-C family. DnaE2 subfamily.

Its subcellular location is the cytoplasm. The catalysed reaction is DNA(n) + a 2'-deoxyribonucleoside 5'-triphosphate = DNA(n+1) + diphosphate. DNA polymerase involved in damage-induced mutagenesis and translesion synthesis (TLS). It is not the major replicative DNA polymerase. In Pseudomonas paraeruginosa (strain DSM 24068 / PA7) (Pseudomonas aeruginosa (strain PA7)), this protein is Error-prone DNA polymerase.